The sequence spans 421 residues: Serine hydroxymethyltransferase (421 aa).

(6S)-5,6,7,8-tetrahydrofolate is bound by residues Leu121 and 125 to 127; that span reads GHL. Lys230 is subject to N6-(pyridoxal phosphate)lysine.

It belongs to the SHMT family. Homodimer. It depends on pyridoxal 5'-phosphate as a cofactor.

It is found in the cytoplasm. The enzyme catalyses (6R)-5,10-methylene-5,6,7,8-tetrahydrofolate + glycine + H2O = (6S)-5,6,7,8-tetrahydrofolate + L-serine. It functions in the pathway one-carbon metabolism; tetrahydrofolate interconversion. It participates in amino-acid biosynthesis; glycine biosynthesis; glycine from L-serine: step 1/1. Its function is as follows. Catalyzes the reversible interconversion of serine and glycine with tetrahydrofolate (THF) serving as the one-carbon carrier. This reaction serves as the major source of one-carbon groups required for the biosynthesis of purines, thymidylate, methionine, and other important biomolecules. Also exhibits THF-independent aldolase activity toward beta-hydroxyamino acids, producing glycine and aldehydes, via a retro-aldol mechanism. The polypeptide is Serine hydroxymethyltransferase (Carboxydothermus hydrogenoformans (strain ATCC BAA-161 / DSM 6008 / Z-2901)).